A 644-amino-acid chain; its full sequence is Arginine--tRNA ligase (644 aa).

Residues 134–144 (VNPTKPLHMGH) carry the 'HIGH' region motif.

This sequence belongs to the class-I aminoacyl-tRNA synthetase family.

The protein resides in the cytoplasm. It carries out the reaction tRNA(Arg) + L-arginine + ATP = L-arginyl-tRNA(Arg) + AMP + diphosphate. This chain is Arginine--tRNA ligase, found in Thermococcus sibiricus (strain DSM 12597 / MM 739).